The following is a 291-amino-acid chain: Heterogeneous nuclear ribonucleoprotein D-like-B (291 aa).

RRM domains lie at 34 to 116 (SKMF…QGKE) and 119 to 196 (KKVF…AAQP). Residues 196 to 226 (PKEVYRQQQQKQQKGGRGGTRGRGRGQGYSN) are disordered. Residues 210-222 (GGRGGTRGRGRGQ) are compositionally biased toward gly residues.

It is found in the nucleus. The protein resides in the cytoplasm. In terms of biological role, acts as a transcriptional regulator. Binds DNA and RNA. The polypeptide is Heterogeneous nuclear ribonucleoprotein D-like-B (hnrnpdl-b) (Xenopus laevis (African clawed frog)).